The sequence spans 377 residues: 23S rRNA (uracil(747)-C(5))-methyltransferase RlmC (377 aa).

Residues Cys3, Cys11, Cys14, and Cys87 each contribute to the [4Fe-4S] cluster site. S-adenosyl-L-methionine-binding residues include Gln212, Phe241, Glu262, and Asn307. Residue Cys334 is the Nucleophile of the active site.

It belongs to the class I-like SAM-binding methyltransferase superfamily. RNA M5U methyltransferase family. RlmC subfamily.

It catalyses the reaction uridine(747) in 23S rRNA + S-adenosyl-L-methionine = 5-methyluridine(747) in 23S rRNA + S-adenosyl-L-homocysteine + H(+). In terms of biological role, catalyzes the formation of 5-methyl-uridine at position 747 (m5U747) in 23S rRNA. This chain is 23S rRNA (uracil(747)-C(5))-methyltransferase RlmC, found in Photorhabdus laumondii subsp. laumondii (strain DSM 15139 / CIP 105565 / TT01) (Photorhabdus luminescens subsp. laumondii).